The primary structure comprises 330 residues: Aspartate--ammonia ligase (330 aa).

The protein belongs to the class-II aminoacyl-tRNA synthetase family. AsnA subfamily.

Its subcellular location is the cytoplasm. The enzyme catalyses L-aspartate + NH4(+) + ATP = L-asparagine + AMP + diphosphate + H(+). It participates in amino-acid biosynthesis; L-asparagine biosynthesis; L-asparagine from L-aspartate (ammonia route): step 1/1. The polypeptide is Aspartate--ammonia ligase (Klebsiella pneumoniae subsp. pneumoniae (strain ATCC 700721 / MGH 78578)).